We begin with the raw amino-acid sequence, 160 residues long: Calcium and integrin-binding family member 3 (160 aa).

EF-hand domains are found at residues 39–74 (KDNPFRQRIAQVFSQDGDGHMTLENFLDMFSVMSEM), 76–111 (PRDLKAYYAFKIYDFNNDNYICAWDLEQTVTRLTRG), and 117–152 (EVTLVCEKVLDEADGDQDGRLSLEDFQNMILRAPDF). Residues D89, N91, D93, Y95, D100, D130, D132, D134, R136, and D141 each contribute to the Ca(2+) site.

Monomer and homodimer. Interacts with ITGA2B (via C-terminus cytoplasmic tail region); the interaction is stabilized/increased in a calcium and magnesium-dependent manner. Interacts with TMC1. Expressed in heart, liver and inner ear. In the inner ear, expressed in vestibule and basilar membrane cells. Expressed in megakaryocytes and endothelial cells.

Acts as an auxiliary subunit of the sensory mechanoelectrical transduction (MET) channel in hair cells. Plays a role in regulating hair cell MET channel localization and function. This Mus musculus (Mouse) protein is Calcium and integrin-binding family member 3 (Cib3).